The chain runs to 218 residues: Ribosomal RNA small subunit methyltransferase J (218 aa).

S-adenosyl-L-methionine is bound by residues arginine 55 to aspartate 56, glutamate 71 to arginine 72, and aspartate 123.

This sequence belongs to the methyltransferase superfamily. RsmJ family.

Its subcellular location is the cytoplasm. It carries out the reaction guanosine(1516) in 16S rRNA + S-adenosyl-L-methionine = N(2)-methylguanosine(1516) in 16S rRNA + S-adenosyl-L-homocysteine + H(+). Specifically methylates the guanosine in position 1516 of 16S rRNA. The polypeptide is Ribosomal RNA small subunit methyltransferase J (Rhodopseudomonas palustris (strain HaA2)).